The primary structure comprises 440 residues: MRNKMIYFNFHLFVIIFANLQIFQVQAANIFCYYDTQRITDVNAAINYLEPALQFCNFLIYGYAGIDGETYQVKSLDYGLNYDIYQAITSLKLKHNRLKVLLSIGGDRDQTEDLAEDNKYLKLLENLSSRNAFINSIQSVIRTYGFDGLDMAWQFPKNPPKHEHSGFRKYLDKLMNLFRRSPVIDENSAFHKEQFVSLLTELRQSLNPMGAIMTMTVLPHVSAELFLDVKPIVNHVDFIILATFDYLTPYRDPTIAHYTAPIYAVSEHDPSHNINYDVQYWLNHTTATSKLVLGVPAYGRSWTMIKKSGITGHPPITAGGPGRAGHRTLTAGLLSWPEICVKIHQNKELEGDAARFRKVSDPTKRFGTYAYRSVDENNEYGIWVSYEEPKTAANKAEYAHARNLSGVALFDLSMDDVTGECGDGTYSILKSIHNAFKKFK.

A signal peptide spans 1–27 (MRNKMIYFNFHLFVIIFANLQIFQVQA). A GH18 domain is found at 28-439 (ANIFCYYDTQ…KSIHNAFKKF (412 aa)). A disulfide bridge connects residues Cys32 and Cys56. 3 N-linked (GlcNAc...) asparagine glycosylation sites follow: Asn126, Asn283, and Asn403. Cys340 and Cys421 are disulfide-bonded.

Belongs to the glycosyl hydrolase 18 family. IDGF subfamily. Glycosylated.

It localises to the secreted. Functionally, cooperates with insulin-like peptides to stimulate the proliferation, polarization and motility of imaginal disk cells. May act by stabilizing the binding of insulin-like peptides to its receptor through a simultaneous interaction with both molecules to form a multiprotein signaling complex. The sequence is that of Chitinase-like protein Idgf5 (Idgf5) from Glossina morsitans morsitans (Savannah tsetse fly).